The chain runs to 349 residues: GTPase Obg (349 aa).

Residues 1-159 (MKFLDQAKVY…LWIWLRLKLI (159 aa)) form the Obg domain. An OBG-type G domain is found at 160–327 (ADAGLIGLPN…VLRALMRVVQ (168 aa)). Residues 166 to 173 (GLPNAGKS), 191 to 195 (FTTLH), 212 to 215 (DIPG), 279 to 282 (SQID), and 308 to 310 (SSA) contribute to the GTP site. Residues S173 and T193 each coordinate Mg(2+).

This sequence belongs to the TRAFAC class OBG-HflX-like GTPase superfamily. OBG GTPase family. As to quaternary structure, monomer. It depends on Mg(2+) as a cofactor.

Its subcellular location is the cytoplasm. In terms of biological role, an essential GTPase which binds GTP, GDP and possibly (p)ppGpp with moderate affinity, with high nucleotide exchange rates and a fairly low GTP hydrolysis rate. Plays a role in control of the cell cycle, stress response, ribosome biogenesis and in those bacteria that undergo differentiation, in morphogenesis control. The chain is GTPase Obg from Chelativorans sp. (strain BNC1).